The sequence spans 464 residues: ATP-dependent protease ATPase subunit HslU (464 aa).

ATP contacts are provided by residues Val-18, 60-65 (GVGKTE), Asp-277, Glu-342, and Arg-414.

Belongs to the ClpX chaperone family. HslU subfamily. As to quaternary structure, a double ring-shaped homohexamer of HslV is capped on each side by a ring-shaped HslU homohexamer. The assembly of the HslU/HslV complex is dependent on binding of ATP.

It localises to the cytoplasm. Its function is as follows. ATPase subunit of a proteasome-like degradation complex; this subunit has chaperone activity. The binding of ATP and its subsequent hydrolysis by HslU are essential for unfolding of protein substrates subsequently hydrolyzed by HslV. HslU recognizes the N-terminal part of its protein substrates and unfolds these before they are guided to HslV for hydrolysis. The sequence is that of ATP-dependent protease ATPase subunit HslU from Lactobacillus leichmannii.